Here is a 483-residue protein sequence, read N- to C-terminus: Aspartyl/glutamyl-tRNA(Asn/Gln) amidotransferase subunit B (483 aa).

The protein belongs to the GatB/GatE family. GatB subfamily. As to quaternary structure, heterotrimer of A, B and C subunits.

It carries out the reaction L-glutamyl-tRNA(Gln) + L-glutamine + ATP + H2O = L-glutaminyl-tRNA(Gln) + L-glutamate + ADP + phosphate + H(+). It catalyses the reaction L-aspartyl-tRNA(Asn) + L-glutamine + ATP + H2O = L-asparaginyl-tRNA(Asn) + L-glutamate + ADP + phosphate + 2 H(+). Its function is as follows. Allows the formation of correctly charged Asn-tRNA(Asn) or Gln-tRNA(Gln) through the transamidation of misacylated Asp-tRNA(Asn) or Glu-tRNA(Gln) in organisms which lack either or both of asparaginyl-tRNA or glutaminyl-tRNA synthetases. The reaction takes place in the presence of glutamine and ATP through an activated phospho-Asp-tRNA(Asn) or phospho-Glu-tRNA(Gln). The polypeptide is Aspartyl/glutamyl-tRNA(Asn/Gln) amidotransferase subunit B (Anaeromyxobacter sp. (strain Fw109-5)).